We begin with the raw amino-acid sequence, 445 residues long: Ribosomal protein uS12 methylthiotransferase RimO (445 aa).

The MTTase N-terminal domain maps to 4-119; the sequence is LKFGLVSLGC…LDDAIEDFFN (116 aa). Cysteine 13, cysteine 48, cysteine 82, cysteine 156, cysteine 160, and cysteine 163 together coordinate [4Fe-4S] cluster. The 231-residue stretch at 142–372 folds into the Radical SAM core domain; it reads TTGEYSSYVR…MLIQQQVSKN (231 aa). Positions 375-441 constitute a TRAM domain; it reads AKKIGKVYKV…EYDLIGVVYN (67 aa).

The protein belongs to the methylthiotransferase family. RimO subfamily. Requires [4Fe-4S] cluster as cofactor.

It is found in the cytoplasm. It catalyses the reaction L-aspartate(89)-[ribosomal protein uS12]-hydrogen + (sulfur carrier)-SH + AH2 + 2 S-adenosyl-L-methionine = 3-methylsulfanyl-L-aspartate(89)-[ribosomal protein uS12]-hydrogen + (sulfur carrier)-H + 5'-deoxyadenosine + L-methionine + A + S-adenosyl-L-homocysteine + 2 H(+). Functionally, catalyzes the methylthiolation of an aspartic acid residue of ribosomal protein uS12. This Clostridium acetobutylicum (strain ATCC 824 / DSM 792 / JCM 1419 / IAM 19013 / LMG 5710 / NBRC 13948 / NRRL B-527 / VKM B-1787 / 2291 / W) protein is Ribosomal protein uS12 methylthiotransferase RimO.